The sequence spans 484 residues: Probable sphingolipid transporter spinster homolog 2 (484 aa).

Residues 1–23 (MDVDGEGDRGQNPRIMERDSDSI) are disordered. The helical transmembrane segment at 38–58 (LLFVFCVVNLINYIDRGAIAS) threads the bilayer. N-linked (GlcNAc...) asparagine glycans are attached at residues N62 and N85. 11 helical membrane-spanning segments follow: residues 93-113 (VLSSAFMVGLLVASPIFASLA), 122-142 (IGVGLSIWTLAVIGCGLSFDF), 147-167 (ICRMFVGVGEASFVSLAAPFI), 181-201 (AVFYMCIPTGYAFGYVYGGVV), 209-229 (AAFWGEAILMLPFAVLGFVIK), 273-293 (VYVTNILGYIAYNFVLGAYSY), 311-331 (IFGGVTVVCGIVGTLSGGVIL), 345-362 (LSVSTFIGAIFCFAAFCF), 377-397 (LLVFATQGPVNFIVLHCVKPS), 405-425 (MSTVSIHIFGDVPSSPLVGVL), and 436-456 (SLVLTFVLFPAAAIWSIGIFL). S466 carries the phosphoserine modification.

It belongs to the major facilitator superfamily. Spinster (TC 2.A.1.49) family.

The protein localises to the late endosome membrane. It is found in the lysosome membrane. Its function is as follows. Probable sphingolipid transporter that plays a central role in endosomes and/or lysosomes storage. This Arabidopsis thaliana (Mouse-ear cress) protein is Probable sphingolipid transporter spinster homolog 2.